Reading from the N-terminus, the 421-residue chain is UDP-N-acetylglucosamine 1-carboxyvinyltransferase (421 aa).

24 to 25 (KN) contributes to the phosphoenolpyruvate binding site. Residue Arg-93 participates in UDP-N-acetyl-alpha-D-glucosamine binding. Cys-117 acts as the Proton donor in catalysis. Position 117 is a 2-(S-cysteinyl)pyruvic acid O-phosphothioketal (Cys-117). Asp-307 and Ile-329 together coordinate UDP-N-acetyl-alpha-D-glucosamine.

This sequence belongs to the EPSP synthase family. MurA subfamily.

It is found in the cytoplasm. The enzyme catalyses phosphoenolpyruvate + UDP-N-acetyl-alpha-D-glucosamine = UDP-N-acetyl-3-O-(1-carboxyvinyl)-alpha-D-glucosamine + phosphate. Its pathway is cell wall biogenesis; peptidoglycan biosynthesis. Cell wall formation. Adds enolpyruvyl to UDP-N-acetylglucosamine. This chain is UDP-N-acetylglucosamine 1-carboxyvinyltransferase, found in Blochmanniella pennsylvanica (strain BPEN).